The following is a 534-amino-acid chain: Probable RNA-binding protein 46 (534 aa).

RRM domains lie at 61 to 139 (CEVF…VSLD), 141 to 223 (CRLF…WASP), and 236 to 308 (KVLY…LAKP).

It is found in the cytoplasm. Its function is as follows. Essential for male and female fertility, playing a crucial role in regulating germ cell development by ensuring the proper progression of meiosis prophase I. This chain is Probable RNA-binding protein 46 (rbm46), found in Xenopus tropicalis (Western clawed frog).